The chain runs to 120 residues: Large ribosomal subunit protein bL20 (120 aa).

It belongs to the bacterial ribosomal protein bL20 family.

Binds directly to 23S ribosomal RNA and is necessary for the in vitro assembly process of the 50S ribosomal subunit. It is not involved in the protein synthesizing functions of that subunit. The chain is Large ribosomal subunit protein bL20 from Ureaplasma urealyticum serovar 10 (strain ATCC 33699 / Western).